Here is a 793-residue protein sequence, read N- to C-terminus: E3 ubiquitin-protein ligase UHRF1 (793 aa).

The Ubiquitin-like domain maps to 1 to 78 (MWIQVRTMDG…IQLLVRQSLV (78 aa)). Residues serine 76, serine 91, serine 95, and serine 165 each carry the phosphoserine modification. The interval 82-124 (STKERDSELSDTDSGCCLGQSESDKSSTHGEAAAETDSRPADE) is disordered. 2 tudor-like regions span residues 133 to 209 (GLYK…ARAR) and 216 to 283 (DLEV…IERP). Lysine 279 participates in a covalent cross-link: Glycyl lysine isopeptide (Lys-Gly) (interchain with G-Cter in SUMO2). Position 287 is a phosphoserine (serine 287). The interval 296–301 (RKSGPS) is linker. Serine 298 is subject to Phosphoserine; by PKA. The segment at 310 to 366 (NRLCRVCACHLCGGRQDPDKQLMCDECDMAFHIYCLDPPLSSVPSEDEWYCPECRND) adopts a PHD-type zinc-finger fold. Histone H3R2me0 binding regions lie at residues 333–337 (CDECD) and 353–355 (PSE). The residue at position 368 (serine 368) is a Phosphoserine. Lysine 385 participates in a covalent cross-link: Glycyl lysine isopeptide (Lys-Gly) (interchain with G-Cter in SUMO2). Lysine 399 is subject to N6-acetyllysine. In terms of domain architecture, YDG spans 419-582 (GPIPGIPVGT…FLVWRYLLRR (164 aa)). Residues 445-446 (HV) form a required to promote base flipping region. DNA contacts are provided by residues 463-464 (AG) and aspartate 469. 2 required for formation of a 5-methylcytosine-binding pocket regions span residues 466–469 (YEDD) and 478–481 (YTGS). At lysine 546 the chain carries N6-acetyllysine; alternate. Residue lysine 546 forms a Glycyl lysine isopeptide (Lys-Gly) (interchain with G-Cter in SUMO2); alternate linkage. Basic and acidic residues predominate over residues 618-629 (REREKENSKREE). A disordered region spans residues 618–673 (REREKENSKREEEEQQEGGFASPRTGKGKWKRKSAGGGPSRAGSPRRTSKKTKVEP). The residue at position 639 (serine 639) is a Phosphoserine; by CDK1. Position 651 is a phosphoserine (serine 651). Residue lysine 670 forms a Glycyl lysine isopeptide (Lys-Gly) (interchain with G-Cter in SUMO2) linkage. Phosphoserine is present on residues serine 707 and serine 709. An RING-type zinc finger spans residues 724 to 763 (CICCQELVFRPITTVCQHNVCKDCLDRSFRAQVFSCPACR).

In terms of assembly, interacts with DNMT3A and DNMT3B. Interacts with DNMT1; the interaction is direct. Interacts with USP7; leading to its deubiquitination. Interacts with histone H3. Interacts with HDAC1, but not with HDAC2. Interacts with BLTP3A. Interacts with PML. Interacts with EHMT2. Binds hemimethylated CpG containing oligonucleotides. Interacts with ZNF263; recruited to the SIX3 promoter along with other proteins involved in chromatin modification and transcriptional corepression where it contributes to transcriptional repression. Interacts with UHRF2. Interacts with FANCD2. Interacts with TET1 isoform 2; this interaction induces the recruitment of TET1 isoform 2 to replicating heterochromatin. Post-translationally, phosphorylation at Ser-298 of the linker region decreases the binding to H3K9me3. Phosphorylation at Ser-639 by CDK1 during M phase impairs interaction with USP7, preventing deubiquitination and leading to degradation by the proteasome. In terms of processing, ubiquitinated; which leads to proteasomal degradation. Autoubiquitinated; interaction with USP7 leads to deubiquitination and prevents degradation. Ubiquitination and degradation takes place during M phase, when phosphorylation at Ser-639 prevents interaction with USP7 and subsequent deubiquitination. Polyubiquitination may be stimulated by DNA damage. As to expression, expressed in thymus, bone marrow, testis, lung and heart. Overexpressed in breast cancer.

It localises to the nucleus. The catalysed reaction is S-ubiquitinyl-[E2 ubiquitin-conjugating enzyme]-L-cysteine + [acceptor protein]-L-lysine = [E2 ubiquitin-conjugating enzyme]-L-cysteine + N(6)-ubiquitinyl-[acceptor protein]-L-lysine.. The protein operates within protein modification; protein ubiquitination. Its function is as follows. Multidomain protein that acts as a key epigenetic regulator by bridging DNA methylation and chromatin modification. Specifically recognizes and binds hemimethylated DNA at replication forks via its YDG domain and recruits DNMT1 methyltransferase to ensure faithful propagation of the DNA methylation patterns through DNA replication. In addition to its role in maintenance of DNA methylation, also plays a key role in chromatin modification: through its tudor-like regions and PHD-type zinc fingers, specifically recognizes and binds histone H3 trimethylated at 'Lys-9' (H3K9me3) and unmethylated at 'Arg-2' (H3R2me0), respectively, and recruits chromatin proteins. Enriched in pericentric heterochromatin where it recruits different chromatin modifiers required for this chromatin replication. Also localizes to euchromatic regions where it negatively regulates transcription possibly by impacting DNA methylation and histone modifications. Has E3 ubiquitin-protein ligase activity by mediating the ubiquitination of target proteins such as histone H3 and PML. It is still unclear how E3 ubiquitin-protein ligase activity is related to its role in chromatin in vivo. Plays a role in DNA repair by cooperating with UHRF2 to ensure recruitment of FANCD2 to interstrand cross-links (ICLs) leading to FANCD2 activation. Acts as a critical player of proper spindle architecture by catalyzing the 'Lys-63'-linked ubiquitination of KIF11, thereby controlling KIF11 localization on the spindle. In Homo sapiens (Human), this protein is E3 ubiquitin-protein ligase UHRF1 (UHRF1).